A 106-amino-acid polypeptide reads, in one-letter code: Large ribosomal subunit protein eL42A (106 aa).

At Lys40 the chain carries N6-methyllysine; by RKM3. At Lys55 the chain carries N6-methyllysine; by RKM4.

Belongs to the eukaryotic ribosomal protein eL42 family. In terms of assembly, component of the large ribosomal subunit (LSU). Mature yeast ribosomes consist of a small (40S) and a large (60S) subunit. The 40S small subunit contains 1 molecule of ribosomal RNA (18S rRNA) and 33 different proteins (encoded by 57 genes). The large 60S subunit contains 3 rRNA molecules (25S, 5.8S and 5S rRNA) and 46 different proteins (encoded by 81 genes). In terms of processing, in wild-type cells, 78% of L42 is monomethylated at both Lys-40 and Lys-55, and 22% are a mixture of species with either residue monomethylated.

The protein resides in the cytoplasm. Component of the ribosome, a large ribonucleoprotein complex responsible for the synthesis of proteins in the cell. The small ribosomal subunit (SSU) binds messenger RNAs (mRNAs) and translates the encoded message by selecting cognate aminoacyl-transfer RNA (tRNA) molecules. The large subunit (LSU) contains the ribosomal catalytic site termed the peptidyl transferase center (PTC), which catalyzes the formation of peptide bonds, thereby polymerizing the amino acids delivered by tRNAs into a polypeptide chain. The nascent polypeptides leave the ribosome through a tunnel in the LSU and interact with protein factors that function in enzymatic processing, targeting, and the membrane insertion of nascent chains at the exit of the ribosomal tunnel. The polypeptide is Large ribosomal subunit protein eL42A (Saccharomyces cerevisiae (strain ATCC 204508 / S288c) (Baker's yeast)).